The chain runs to 3677 residues: Dystrophin (3677 aa).

An actin-binding region spans residues 1–240 (MLWWEEVEDC…YITSLFQVLP (240 aa)). Calponin-homology (CH) domains follow at residues 15-119 (DVQK…LHWQ) and 134-240 (TNSE…QVLP). Residues 63–72 (PKEKGSTRVH) form an ANK2- and ANK-3 binding region. Spectrin repeat units follow at residues 342 to 447 (LDSY…SNLH), 451 to 557 (MDLQ…LLQD), 560 to 668 (LKWQ…QISQ), 728 to 828 (DITE…NWLE), 831 to 935 (NNII…ELQT), 944 to 1046 (RYQE…KLEE), 1049 to 1154 (NKLR…EALK), 1163 to 1264 (LQKD…TLEE), 1268 to 1464 (CWHE…LFQK), 1469 to 1569 (EQRL…QLEK), 1573 to 1676 (LSRK…NLLL), 1680 to 1777 (KHME…TGKA), 1779 to 1875 (IPLK…KALE), 1878 to 1980 (HQWY…TLHE), 2001 to 2098 (YLTE…ERQG), 2106 to 2209 (KWRH…RVEE), 2215 to 2316 (SEFQ…GELE), 2317 to 2415 (VHIK…LRTK), 2465 to 2569 (ADFN…QLNE), 2576 to 2678 (QWLE…ALEE), 2682 to 2786 (LLQQ…KKSL), 2800 to 2922 (KRLH…RKID), and 2927 to 3032 (RLQE…QLHE). Residues 1416 to 1914 (SDLTSHEISL…PEPRDERKIK (499 aa)) form an interaction with SYNM region. The region spanning 3047 to 3080 (TSVQGPWERAISPNKVPYYINHETQTTCWDHPKM) is the WW domain. The tract at residues 3050 to 3400 (QGPWERAISP…TVLEGDNMET (351 aa)) is interaction with SYNM. A ZZ-type; degenerate zinc finger spans residues 3300-3356 (KHQAKCNICKECPIIGFRYRSLKHFNYDICQSCFFSGRVAKGHKMHYPMVEYCTPTT). Cys-3305, Cys-3308, Cys-3329, and Cys-3332 together coordinate Zn(2+). Positions 3458-3510 (DDEHLLIQHYCQSLNQDSPLSQPRSPAQILISLESEERGELERILADLEEENR) are binds to SNTB1. Residues Ser-3475, Ser-3482, and Ser-3492 each carry the phosphoserine modification. Disordered stretches follow at residues 3520–3546 (KQQHEHKGLSPLPSPPEMMPTSPQSPR) and 3595–3677 (EAKV…EDTM). Composition is skewed to polar residues over residues 3599-3618 (NGTTVSSPSTSLQRSDSSQP) and 3654-3664 (QLNNSFPSSRG). Phosphoserine is present on residues Ser-3604, Ser-3605, Ser-3609, Ser-3615, Ser-3616, and Ser-3658.

As to quaternary structure, interacts with SYNM. Interacts with the syntrophins SNTG1 and SNTG2. Interacts with KRT19. Component of the dystrophin-associated glycoprotein complex which is composed of three subcomplexes: a cytoplasmic complex comprised of DMD (or UTRN), DTNA and a number of syntrophins, such as SNTB1, SNTB2, SNTG1 and SNTG2, the transmembrane dystroglycan complex, and the sarcoglycan-sarcospan complex. Interacts with DAG1 (betaDAG1) with DMD; the interaction is inhibited by phosphorylation on the PPXY motif of DAG1. Interacts with SYNM; SNTA1 and SNTB1. Interacts with CMYA5. Directly interacts with ANK2 and ANK3; these interactions do not interfere with betaDAG1-binding and are necessary for proper localization in muscle cells. Identified in a dystroglycan complex that contains at least PRX, DRP2, UTRN, DMD and DAG1. Interacts with DTNB. Interacts with PGM5; the interaction is direct. Interacts with NOS1; localizes NOS1 to sarcolemma in muscle cells. In terms of tissue distribution, strongly expressed in skeletal muscle and weak expression observed in newborn brain which increases in adult brain.

The protein localises to the cell membrane. It is found in the sarcolemma. Its subcellular location is the cytoplasm. The protein resides in the cytoskeleton. It localises to the postsynaptic cell membrane. Its function is as follows. Anchors the extracellular matrix to the cytoskeleton via F-actin. Ligand for dystroglycan. Component of the dystrophin-associated glycoprotein complex which accumulates at the neuromuscular junction (NMJ) and at a variety of synapses in the peripheral and central nervous systems and has a structural function in stabilizing the sarcolemma. Also implicated in signaling events and synaptic transmission. The sequence is that of Dystrophin (Dmd) from Rattus norvegicus (Rat).